The chain runs to 505 residues: Cell division control protein 6 homolog B (505 aa).

The segment at 37–72 is disordered; it reads KRKMRSDSAAVSGNSVSTPKKLKSHLPSSVPNPGMS. Residues 45 to 54 are compositionally biased toward polar residues; the sequence is AAVSGNSVST.

It belongs to the CDC6/cdc18 family.

Its subcellular location is the nucleus. May be involved in the initiation of DNA replication. The polypeptide is Cell division control protein 6 homolog B (Arabidopsis thaliana (Mouse-ear cress)).